The sequence spans 367 residues: Uptake hydrogenase small subunit (367 aa).

Residues 1–45 (MTPTETFYEVMRRQGVTRRSFLKFCSLTATALGLGPAYTSEIAHA) constitute a signal peptide (tat-type signal). 8 residues coordinate [4Fe-4S] cluster: Cys-62, Cys-65, Cys-160, Cys-194, His-232, Cys-235, Cys-260, and Cys-266. Residues Cys-275, Cys-294, and Cys-297 each contribute to the [3Fe-4S] cluster site.

Belongs to the [NiFe]/[NiFeSe] hydrogenase small subunit family. In terms of assembly, heterodimer of a large and a small subunit. [4Fe-4S] cluster is required as a cofactor. [3Fe-4S] cluster serves as cofactor. Predicted to be exported by the Tat system. The position of the signal peptide cleavage has been experimentally proven.

It localises to the cell membrane. The enzyme catalyses H2 + A = AH2. Its function is as follows. This enzyme recycles the H(2) produced by nitrogenase to increase the production of ATP and to protect nitrogenase against inhibition or damage by O(2) under carbon- or phosphate-limited conditions. The chain is Uptake hydrogenase small subunit (hoxS) from Afipia carboxidovorans (strain ATCC 49405 / DSM 1227 / KCTC 32145 / OM5) (Oligotropha carboxidovorans).